Here is a 316-residue protein sequence, read N- to C-terminus: Cation efflux system protein CzcD (316 aa).

The next 6 helical transmembrane spans lie at 17–37 (LKIA…GGVM), 47–67 (AAHM…IAIA), 82–102 (FEIL…IYIL), 115–135 (IEST…LISM), 152–172 (YLEV…AIII), and 174–194 (FTGW…WVLP).

This sequence belongs to the cation diffusion facilitator (CDF) transporter (TC 2.A.4) family. SLC30A subfamily.

The protein resides in the cell membrane. Functionally, necessary for activation of the czc determinant. The protein is Cation efflux system protein CzcD (czcD) of Alcaligenes sp. (strain CT14).